The chain runs to 403 residues: Nucleoporin nup44 (403 aa).

Polar residues-rich tracts occupy residues 1 to 31 and 67 to 124; these read MAFSFGQQGSSIKAPSIGSTGVFGQSNTTKP and FGKT…DETN. The segment at 1 to 124 is disordered; it reads MAFSFGQQGS…NPTKPVDETN (124 aa).

It localises to the cytoplasm. The protein localises to the nucleus. Functionally, functions as a component of the nuclear pore complex (NPC). NPC components, collectively referred to as nucleoporins (NUPs), can play the role of both NPC structural components and of docking or interaction partners for transiently associated nuclear transport factors. Active directional transport is assured by both, a Phe-Gly (FG) repeat affinity gradient for these transport factors across the NPC and a transport cofactor concentration gradient across the nuclear envelope. This Schizosaccharomyces pombe (strain 972 / ATCC 24843) (Fission yeast) protein is Nucleoporin nup44 (nup44).